A 696-amino-acid polypeptide reads, in one-letter code: C2 domain-containing protein 2 (696 aa).

A helical transmembrane segment spans residues 8-28; the sequence is VQWLFLVSLFVAALGTVGLYL. Residues 45-238 enclose the SMP-LBD domain; sequence EPDELRRRES…PTQVKEAQSL (194 aa). Phosphoserine is present on S54. In terms of domain architecture, C2 spans 241-357; that stretch reads PSSTAQEPCP…RKQPNGPQTF (117 aa). Position 436 is a phosphoserine (S436). T440 carries the post-translational modification Phosphothreonine. A disordered region spans residues 551–611; it reads ATEASATTPP…DGDELSESSL (61 aa). The span at 573–588 shows a compositional bias: basic and acidic residues; sequence KPRENDLDSWELEKES. S581 is subject to Phosphoserine.

The protein resides in the membrane. The sequence is that of C2 domain-containing protein 2 from Mus musculus (Mouse).